A 203-amino-acid polypeptide reads, in one-letter code: Endo-type membrane-bound lytic murein transglycosylase A (203 aa).

A signal peptide spans 1–15 (MKLRWFAFLIVLLAG). Cys-16 carries N-palmitoyl cysteine lipidation. A lipid anchor (S-diacylglycerol cysteine) is attached at Cys-16.

The protein belongs to the transglycosylase Slt family.

Its subcellular location is the cell outer membrane. It carries out the reaction Endolytic cleavage of the (1-&gt;4)-beta-glycosidic linkage between N-acetylmuramic acid (MurNAc) and N-acetylglucosamine (GlcNAc) residues in peptidoglycan with concomitant formation of a 1,6-anhydrobond in the MurNAc residue.. In terms of biological role, murein-degrading enzyme. May play a role in recycling of muropeptides during cell elongation and/or cell division. Preferentially cleaves at a distance of more than two disaccharide units from the ends of the glycan chain. The chain is Endo-type membrane-bound lytic murein transglycosylase A from Shigella boydii serotype 4 (strain Sb227).